The sequence spans 253 residues: tRNA uridine(34) hydroxylase (253 aa).

Residues 127–221 form the Rhodanese domain; sequence HGRPLVLLDT…YFEDVGGEGY (95 aa). Cysteine 181 (cysteine persulfide intermediate) is an active-site residue.

The protein belongs to the TrhO family.

The catalysed reaction is uridine(34) in tRNA + AH2 + O2 = 5-hydroxyuridine(34) in tRNA + A + H2O. Functionally, catalyzes oxygen-dependent 5-hydroxyuridine (ho5U) modification at position 34 in tRNAs. The sequence is that of tRNA uridine(34) hydroxylase from Xanthomonas campestris pv. campestris (strain 8004).